The sequence spans 177 residues: MGTAKEKKQQIVAEFKDKLSQAQTVIFSNFSGLTVEDDTILRRKFREANSEYKVYKNTLMTIAAKELGYGDDLIKYFEGPTSVAFGYDDPVAPAKVLVEFMKDHKGIELKAGLVNGKLVTVEEIKALAELPSREELVAKALGSMKAPITNLVFVLSGTLRSLLYALNAVKEKKQAEA.

It belongs to the universal ribosomal protein uL10 family. Part of the ribosomal stalk of the 50S ribosomal subunit. The N-terminus interacts with L11 and the large rRNA to form the base of the stalk. The C-terminus forms an elongated spine to which L12 dimers bind in a sequential fashion forming a multimeric L10(L12)X complex.

Functionally, forms part of the ribosomal stalk, playing a central role in the interaction of the ribosome with GTP-bound translation factors. The chain is Large ribosomal subunit protein uL10 from Thermoanaerobacter pseudethanolicus (strain ATCC 33223 / 39E) (Clostridium thermohydrosulfuricum).